The primary structure comprises 1312 residues: Angiotensin-converting enzyme (1312 aa).

Positions 1–34 (MGAASGQRGRWPLSPPLLMLSLLVLLLQPSPAPA) are cleaved as a signal peptide. Over 35 to 1264 (LDPGLQPGNF…LEPQQARVGQ (1230 aa)) the chain is Extracellular. Peptidase M2 domains follow at residues 45-629 (SPDE…LGWP) and 648-1227 (ETDE…LGWP). N59, N79, N116, N151, and N165 each carry an N-linked (GlcNAc...) asparagine glycan. Cysteines 162 and 170 form a disulfide. Y236 contributes to the chloride binding site. N-linked (GlcNAc...) asparagine glycosylation occurs at N323. C364 and C382 are disulfide-bonded. H395 is a Zn(2+) binding site. Residue E396 is the Proton acceptor 1 of the active site. Residues H399 and E423 each coordinate Zn(2+). N-linked (GlcNAc...) asparagine glycosylation occurs at N514. The Proton donor 1 role is filled by H525. R534 contacts chloride. Cysteines 550 and 562 form a disulfide. A glycan (N-linked (GlcNAc...) asparagine) is linked at N682. Residues N700 and N719 are each glycosylated (N-linked (GlcNAc...) (complex) asparagine). Cysteines 762 and 768 form a disulfide. N765 is a glycosylation site (N-linked (GlcNAc...) asparagine). Chloride contacts are provided by R796 and Y834. An N-linked (GlcNAc...) asparagine glycan is attached at N947. A disulfide bridge connects residues C962 and C980. H993 contributes to the Zn(2+) binding site. E994 acts as the Proton acceptor 2 in catalysis. Residues H997 and E1021 each coordinate Zn(2+). W1095 and R1099 together coordinate chloride. The active-site Proton donor 2 is the H1123. R1132 contacts chloride. A disulfide bridge connects residues C1148 and C1160. N-linked (GlcNAc...) asparagine glycosylation occurs at N1196. The interval 1220–1261 (HGETLGWPEYNWAPNTARAEGSTAESNRVNFLGLYLEPQQAR) is juxtamembrane stalk. A helical transmembrane segment spans residues 1265 to 1281 (WVLLFLGVALLVATVGL). Topologically, residues 1282 to 1312 (AHRLYNIRNHHSLRRPHRGPQFGSEVELRHS) are cytoplasmic. At S1305 the chain carries Phosphoserine.

The protein belongs to the peptidase M2 family. As to quaternary structure, monomer and homodimer; homodimerizes following binding to an inhibitor. Interacts with calmodulin (CALM1, CALM2 or CALM3); interaction takes place in the cytoplasmic region and regulates phosphorylation and proteolytic cleavage. Requires Zn(2+) as cofactor. It depends on chloride as a cofactor. Post-translationally, produced following proteolytic cleavage by secretase enzymes that cleave the transmembrane form in the juxtamembrane stalk region upstream of the transmembrane region. Cleavage can take place at different sites of the juxtamembrane stalk region. In terms of processing, phosphorylated by CK2 on Ser-1305; which allows membrane retention. Phosphorylated on tyrosine residues on its extracellular part, promoting cleavage by secretase enzymes and formation of the soluble form (Angiotensin-converting enzyme, soluble form). Highly expressed in kidney and lung; not expressed in the liver. In the brain, expressed in the cerebral cortex, hippocampus, cerebellum and basal ganglia/brainstem. Highly expressed in dopamine receptor DRD1-expressing neurons in the dorsal striatum and the nucleus accumbens of the brain. As to expression, specifically expressed in spermatocytes, adult testis.

The protein resides in the cell membrane. Its subcellular location is the cytoplasm. It localises to the secreted. The catalysed reaction is Release of a C-terminal dipeptide, oligopeptide-|-Xaa-Yaa, when Xaa is not Pro, and Yaa is neither Asp nor Glu. Thus, conversion of angiotensin I to angiotensin II, with increase in vasoconstrictor activity, but no action on angiotensin II.. It catalyses the reaction angiotensin I + H2O = L-histidyl-L-leucine + angiotensin II. The enzyme catalyses bradykinin + H2O = L-Phe-L-Arg + bradykinin(1-7). It carries out the reaction substance P + H2O = substance P(1-9) + L-Leu-L-Met-NH2. The catalysed reaction is substance P + H2O = substance P(1-8) + Gly-L-Leu-L-Met-NH2. It catalyses the reaction substance P + H2O = L-Phe-L-Phe-Gly-L-Leu-L-Met-NH2 + substance P(1-6). The enzyme catalyses neurotensin + H2O = neurotensin(1-11) + L-isoleucyl-L-leucine. It carries out the reaction goralatide + H2O = N-acetyl-L-seryl-L-aspartate + L-lysyl-L-proline. The catalysed reaction is Met-enkephalin + H2O = L-phenylalanyl-L-methionine + L-tyrosylglycylglycine. It catalyses the reaction Leu-enkephalin + H2O = L-tyrosylglycylglycine + L-phenylalanyl-L-leucine. The enzyme catalyses Met-enkephalin-Arg-Phe + H2O = L-arginyl-L-phenylalanine + Met-enkephalin. The dipeptidyl carboxypeptidase activity is specifically inhibited by lisinopril, captopril and enalaprilat. The N-terminal catalytic domain, but not the C-terminal catalytic domain, is specifically inhibited by the phosphinic peptide RXP 407. With respect to regulation, the putative GPIase activity is nearly insensitive to captopril. Dipeptidyl carboxypeptidase that removes dipeptides from the C-terminus of a variety of circulating hormones, such as angiotensin I, bradykinin or enkephalins, thereby playing a key role in the regulation of blood pressure, electrolyte homeostasis or synaptic plasticity. Composed of two similar catalytic domains, each possessing a functional active site, with different selectivity for substrates. Plays a major role in the angiotensin-renin system that regulates blood pressure and sodium retention by the kidney by converting angiotensin I to angiotensin II, resulting in an increase of the vasoconstrictor activity of angiotensin. Also able to inactivate bradykinin, a potent vasodilator, and therefore enhance the blood pressure response. Acts as a regulator of synaptic transmission by mediating cleavage of neuropeptide hormones, such as substance P, neurotensin or enkephalins. Catalyzes degradation of different enkephalin neuropeptides (Met-enkephalin, Leu-enkephalin, Met-enkephalin-Arg-Phe and possibly Met-enkephalin-Arg-Gly-Leu). Acts as a regulator of synaptic plasticity in the nucleus accumbens of the brain by mediating cleavage of Met-enkephalin-Arg-Phe, a strong ligand of Mu-type opioid receptor OPRM1, into Met-enkephalin. Met-enkephalin-Arg-Phe cleavage by ACE decreases activation of OPRM1, leading to long-term synaptic potentiation of glutamate release. Also acts as a regulator of hematopoietic stem cell differentiation by mediating degradation of hemoregulatory peptide N-acetyl-SDKP (AcSDKP). Acts as a regulator of cannabinoid signaling pathway by mediating degradation of hemopressin, an antagonist peptide of the cannabinoid receptor CNR1. Involved in amyloid-beta metabolism by catalyzing degradation of Amyloid-beta protein 40 and Amyloid-beta protein 42 peptides, thereby preventing plaque formation. Catalyzes cleavage of cholecystokinin (maturation of Cholecystokinin-8 and Cholecystokinin-5) and Gonadoliberin-1 (both maturation and degradation) hormones. Degradation of hemoregulatory peptide N-acetyl-SDKP (AcSDKP) and amyloid-beta proteins is mediated by the N-terminal catalytic domain, while angiotensin I and cholecystokinin cleavage is mediated by the C-terminal catalytic region. Functionally, soluble form that is released in blood plasma and other body fluids following proteolytic cleavage in the juxtamembrane stalk region. In terms of biological role, isoform produced by alternative promoter usage that is specifically expressed in spermatocytes and adult testis, and which is required for male fertility. In contrast to somatic isoforms, only contains one catalytic domain. Acts as a dipeptidyl carboxypeptidase that removes dipeptides from the C-terminus of substrates. The identity of substrates that are needed for male fertility is unknown. Isoform Testis-specific and isoform Somatic have distinct activities and cannot completely compensate for the loss of the other when expressed in somatic tissues or testis. May also have a glycosidase activity which releases GPI-anchored proteins from the membrane by cleaving the mannose linkage in the GPI moiety. The GPIase activity was reported to be essential for the egg-binding ability of the sperm. This activity is however unclear and has been challenged by other groups, suggesting that it may be indirect. This chain is Angiotensin-converting enzyme, found in Mus musculus (Mouse).